Reading from the N-terminus, the 169-residue chain is PTS system glucose-specific EIIA component (169 aa).

A PTS EIIA type-1 domain is found at 39 to 143 (DVVFAEKIVG…STLTPVVISN (105 aa)). His76 and His91 together coordinate Zn(2+). Catalysis depends on His91, which acts as the Tele-phosphohistidine intermediate; for EIIA activity. The residue at position 91 (His91) is a Phosphohistidine; by HPr.

In terms of assembly, heterodimer with glycerol kinase (glpk). Zn(2+) is required as a cofactor.

It localises to the cytoplasm. Its function is as follows. The phosphoenolpyruvate-dependent sugar phosphotransferase system (sugar PTS), a major carbohydrate active transport system, catalyzes the phosphorylation of incoming sugar substrates concomitantly with their translocation across the cell membrane. The enzyme II complex composed of PtsG and Crr is involved in glucose transport. The sequence is that of PTS system glucose-specific EIIA component (crr) from Salmonella typhi.